The sequence spans 239 residues: Exosome complex component Rrp41 (239 aa).

The interval 1–21 (MEERPERLISEDGLRLDGRKP) is disordered.

The protein belongs to the RNase PH family. Rrp41 subfamily. In terms of assembly, component of the archaeal exosome complex. Forms a hexameric ring-like arrangement composed of 3 Rrp41-Rrp42 heterodimers. The hexameric ring associates with a trimer of Rrp4 and/or Csl4 subunits.

The protein resides in the cytoplasm. Functionally, catalytic component of the exosome, which is a complex involved in RNA degradation. Has 3'-&gt;5' exoribonuclease activity. Can also synthesize heteromeric RNA-tails. This is Exosome complex component Rrp41 from Methanopyrus kandleri (strain AV19 / DSM 6324 / JCM 9639 / NBRC 100938).